Consider the following 399-residue polypeptide: Glycerate 2-kinase (399 aa).

Position 48 (Lys-48) interacts with substrate.

It belongs to the glycerate kinase type-1 family. Homodimer. Requires Mg(2+) as cofactor. Ni(2+) serves as cofactor. It depends on Mn(2+) as a cofactor. Co(2+) is required as a cofactor. The cofactor is Ca(2+). Requires Zn(2+) as cofactor. Sr(2+) serves as cofactor.

The catalysed reaction is (R)-glycerate + ATP = (2R)-2-phosphoglycerate + ADP + H(+). Its function is as follows. Catalyzes the ATP-dependent phosphorylation of D-glycerate to 2-phosphoglycerate. It can also utilize GTP, CTP, UTP, ADP, AMP or pyrophosphate as phosphate donor. This chain is Glycerate 2-kinase (gck), found in Sulfurisphaera tokodaii (strain DSM 16993 / JCM 10545 / NBRC 100140 / 7) (Sulfolobus tokodaii).